Reading from the N-terminus, the 215-residue chain is Protein FAM27D1 (215 aa).

The segment at 74 to 172 is disordered; it reads QPKTHTHTGM…RGTQADLSSR (99 aa). Positions 87 to 108 are enriched in basic and acidic residues; the sequence is THRERERNTQRLRDRERRENGR. Basic residues predominate over residues 109-122; that stretch reads HTHRHTHTLTHTHT. 2 stretches are compositionally biased toward basic and acidic residues: residues 123-139 and 149-162; these read HRDT…ETHT and SAHD…REQP. Residues 163 to 172 are compositionally biased toward polar residues; that stretch reads RGTQADLSSR.

It belongs to the FAM27 family.

This chain is Protein FAM27D1 (FAM27D1), found in Homo sapiens (Human).